We begin with the raw amino-acid sequence, 545 residues long: ATP synthase subunit alpha, mitochondrial (545 aa).

The N-terminal 35 residues, 1–35 (MLARTAAIRSLSRTLINSTKAARPAAAALASTRRL), are a transit peptide targeting the mitochondrion. Phosphoserine is present on residues serine 57 and serine 178. 206 to 213 (GDRQTGKT) lines the ATP pocket.

It belongs to the ATPase alpha/beta chains family. As to quaternary structure, F-type ATPases have 2 components, CF(1) - the catalytic core - and CF(0) - the membrane proton channel. CF(1) has five subunits: alpha(3), beta(3), gamma(1), delta(1), epsilon(1). CF(0) has three main subunits: a, b and c.

Its subcellular location is the mitochondrion inner membrane. Functionally, mitochondrial membrane ATP synthase (F(1)F(0) ATP synthase or Complex V) produces ATP from ADP in the presence of a proton gradient across the membrane which is generated by electron transport complexes of the respiratory chain. F-type ATPases consist of two structural domains, F(1) - containing the extramembraneous catalytic core, and F(0) - containing the membrane proton channel, linked together by a central stalk and a peripheral stalk. During catalysis, ATP synthesis in the catalytic domain of F(1) is coupled via a rotary mechanism of the central stalk subunits to proton translocation. Subunits alpha and beta form the catalytic core in F(1). Rotation of the central stalk against the surrounding alpha(3)beta(3) subunits leads to hydrolysis of ATP in three separate catalytic sites on the beta subunits. Subunit alpha does not bear the catalytic high-affinity ATP-binding sites. This Saccharomyces cerevisiae (strain ATCC 204508 / S288c) (Baker's yeast) protein is ATP synthase subunit alpha, mitochondrial (ATP1).